The sequence spans 504 residues: Heat shock 70 kDa protein 14 (504 aa).

The protein belongs to the heat shock protein 70 family. Component of ribosome-associated complex (RAC).

It localises to the cytoplasm. It is found in the cytosol. Component of the ribosome-associated complex (RAC), a complex involved in folding or maintaining nascent polypeptides in a folding-competent state. In Danio rerio (Zebrafish), this protein is Heat shock 70 kDa protein 14 (hspa14).